Consider the following 249-residue polypeptide: Testis-expressed protein 101 (249 aa).

The signal sequence occupies residues methionine 1–glutamate 25. N-linked (GlcNAc...) asparagine glycosylation is found at asparagine 45 and asparagine 159. Positions cysteine 140–histidine 211 constitute a UPAR/Ly6 domain. The GPI-anchor amidated asparagine moiety is linked to residue asparagine 222. The propeptide at glycine 223–serine 249 is removed in mature form.

In terms of assembly, interacts with VAMP3. Interacts with LY6K. Interacts with DPEP3; co-localized on the cell surface of spermatocytes, spermatids, and testicular spermatozoa, co-localized only in cytoplasmic droplets of caput and corpus epididymal sperm. Interacts with ADAM5. In terms of processing, N-glycosylated; by high mannose and/or biantennary complex and/or certain types of hybrid oligosaccharides; possesses different oligosaccharides chains according to its subcellular localization in the testis. Post-translationally, sheds from membrane raft by ACE and released from the cell surface of epididymal sperm while it passes through the caput epididymis leading to disappearance of TEX101 on spermatozoa; is essential to produce fertile spermatozoa. Detected in testis and spermatogonia. Not detected in spermatocytes. Detected in blood leukocytes.

The protein localises to the cell membrane. Its subcellular location is the membrane raft. It is found in the cytoplasmic vesicle. It localises to the secretory vesicle. The protein resides in the acrosome. The protein localises to the secreted. In terms of biological role, plays a role in fertilization by controlling binding of sperm to zona pellucida and migration of spermatozoa into the oviduct. May play a role in signal transduction and promote protein tyrosine phosphorylation. The sequence is that of Testis-expressed protein 101 from Homo sapiens (Human).